An 81-amino-acid polypeptide reads, in one-letter code: Small ribosomal subunit protein bS20 (81 aa).

Residues 1–11 (MPNIKSQKKRV) are compositionally biased toward basic residues. A disordered region spans residues 1 to 20 (MPNIKSQKKRVLTNEKSRAS).

This sequence belongs to the bacterial ribosomal protein bS20 family.

Binds directly to 16S ribosomal RNA. This Mesoplasma florum (strain ATCC 33453 / NBRC 100688 / NCTC 11704 / L1) (Acholeplasma florum) protein is Small ribosomal subunit protein bS20.